Consider the following 416-residue polypeptide: Gap junction alpha-3 protein (416 aa).

Residues G2–Q15 lie within the membrane without spanning it. Residues E16–T19 are Cytoplasmic-facing. Residues V20–A40 form a helical membrane-spanning segment. The Extracellular segment spans residues A41 to P71. Disulfide bonds link C54–C198, C61–C192, and C65–C187. The chain crosses the membrane as a helical span at residues I72–Y92. Residues L93 to N158 are Cytoplasmic-facing. Positions E110–M128 are enriched in basic and acidic residues. The tract at residues E110 to D141 is disordered. Residues I159–F179 form a helical membrane-spanning segment. Topologically, residues Q180–T207 are extracellular. The chain crosses the membrane as a helical span at residues I208–I228. The Cytoplasmic segment spans residues Y229–I416. Residues G336–I416 are disordered. The segment covering P342 to P353 has biased composition (low complexity).

It belongs to the connexin family. Alpha-type (group II) subfamily. As to quaternary structure, a hemichannel or connexon is composed of a hexamer of connexins. A functional gap junction is formed by the apposition of two hemichannels. Forms heteromeric channels with GJA8. In terms of tissue distribution, detected in eye lens (at protein level). Most abundant in lens, but also present in heart and kidney.

Its subcellular location is the cell membrane. The protein localises to the cell junction. The protein resides in the gap junction. In terms of biological role, structural component of lens fiber gap junctions. Gap junctions are dodecameric channels that connect the cytoplasm of adjoining cells. They are formed by the docking of two hexameric hemichannels, one from each cell membrane. Small molecules and ions diffuse from one cell to a neighboring cell via the central pore. In Rattus norvegicus (Rat), this protein is Gap junction alpha-3 protein (Gja3).